The primary structure comprises 578 residues: Probable methylcrotonoyl-CoA carboxylase beta chain, mitochondrial (578 aa).

Residues 1 to 29 constitute a mitochondrion transit peptide; that stretch reads MIRLNWLFRSSSVLLRSQVRLLHVGDANV. The CoA carboxyltransferase N-terminal domain occupies 48–305; the sequence is MASLVGDLRN…SATNSYNDQL (258 aa). The segment at 48–570 is carboxyltransferase; that stretch reads MASLVGDLRN…KAALNNAGQE (523 aa). The CoA carboxyltransferase C-terminal domain occupies 321 to 570; the sequence is AVEEPRYDAE…KAALNNAGQE (250 aa). Residues 355–388 form an acyl-CoA binding region; that stretch reads DGSRFTEFKKLYGETLVCGFAKLYGHTVGIVGNN.

Belongs to the AccD/PCCB family. Expressed in third instar larval ring gland (lateral and medial secretory cells and corpus cardiacum cells) and CNS.

It is found in the mitochondrion matrix. It carries out the reaction 3-methylbut-2-enoyl-CoA + hydrogencarbonate + ATP = 3-methyl-(2E)-glutaconyl-CoA + ADP + phosphate + H(+). It functions in the pathway amino-acid degradation; L-leucine degradation; (S)-3-hydroxy-3-methylglutaryl-CoA from 3-isovaleryl-CoA: step 2/3. Its function is as follows. Carboxyltransferase subunit of the 3-methylcrotonyl-CoA carboxylase, an enzyme that catalyzes the conversion of 3-methylcrotonyl-CoA to 3-methylglutaconyl-CoA, a critical step for leucine and isovaleric acid catabolism. Vital for adult survival. This is Probable methylcrotonoyl-CoA carboxylase beta chain, mitochondrial from Drosophila melanogaster (Fruit fly).